The following is a 313-amino-acid chain: uncharacterized protein (313 aa).

Residues 2–57 (KLERLLAMVVLLISKKQVQAAELAELFEVSVRTIYRDIETINRAGIPIVTSQGSGG) enclose the HTH deoR-type domain. Residues 19–38 (VQAAELAELFEVSVRTIYRD) constitute a DNA-binding region (H-T-H motif). Positions 131 to 210 (HTEDQKTLRE…KDLAILHQTF (80 aa)) constitute a WYL domain.

The protein resides in the cytoplasm. This is an uncharacterized protein from Bacillus subtilis (strain 168).